A 699-amino-acid chain; its full sequence is PTS system glucose-specific EIICBA component (699 aa).

In terms of domain architecture, PTS EIIC type-1 spans 3-424 (KALFGVLQKI…FNLKTPGRED (422 aa)). The next 11 membrane-spanning stretches (helical) occupy residues 16–36 (LMLPVAILPAAGILLAIGNAM), 66–86 (IVFDNLPLLFAVGVAIGLANG), 89–109 (VAGIAAIIGYLVMNVSMSAVL), 139–159 (IPTLATGVFGGIIVGVLAALL), 180–200 (FVPIVTSISALILGLIMLVIW), 233–253 (LIPFGLHHIFYSPFWYEFFSY), 283–303 (FMTGKYPFMMFGLPAAALAIY), 313–333 (LVAGIMGSAALTSFLTGITEP), 338–358 (FLFVAPVLFAIHCLFAGLSFM), 365–385 (VKIGMTFSGGLIDYFLFGILP), and 388–408 (TAWWLVIPVGLGLAVIYYFGF). The PTS EIIB type-1 domain maps to 439–520 (GDLPYEILQA…QDIIAGRKPR (82 aa)). Residue Cys-461 is the Phosphocysteine intermediate; for EIIB activity of the active site. The region spanning 568 to 672 (DQVFSGKMMG…SLMTPIVFTN (105 aa)) is the PTS EIIA type-1 domain. The active-site Tele-phosphohistidine intermediate; for EIIA activity is the His-620.

It localises to the cell membrane. It catalyses the reaction N(pros)-phospho-L-histidyl-[protein] + D-glucose(out) = D-glucose 6-phosphate(in) + L-histidyl-[protein]. The catalysed reaction is D-glucosamine(out) + N(pros)-phospho-L-histidyl-[protein] = D-glucosamine 6-phosphate(in) + L-histidyl-[protein]. Functionally, the phosphoenolpyruvate-dependent sugar phosphotransferase system (sugar PTS), a major carbohydrate active transport system, catalyzes the phosphorylation of incoming sugar substrates concomitantly with their translocation across the cell membrane. This system is involved in glucose transport. The system can also transport glucosamine. Its function is as follows. In addition, plays an important role in the phosphorylation of EIIA-deficient PTS transporters. The EIIA domain can transfer a phosphoryl group to EIIA-deficient PTS transporters, enabling growth with maltose, N-acetylglucosamine, sucrose or trehalose as the sole carbon source. The polypeptide is PTS system glucose-specific EIICBA component (ptsG) (Bacillus subtilis (strain 168)).